The primary structure comprises 138 residues: Large ribosomal subunit protein uL16 (138 aa).

The segment covering 1–17 (MLIPRKVKHRKQHHPRQ) has biased composition (basic residues). Residues 1–22 (MLIPRKVKHRKQHHPRQRGIAS) form a disordered region.

It belongs to the universal ribosomal protein uL16 family. Part of the 50S ribosomal subunit.

Functionally, binds 23S rRNA and is also seen to make contacts with the A and possibly P site tRNAs. The protein is Large ribosomal subunit protein uL16 of Mycobacterium leprae (strain Br4923).